The following is a 316-amino-acid chain: MYEWLNALPKAELHMHLEGSLEPELLFALAERNKIALPWADVETLRGAYAFNNLQEFLDLYYQGADVLRTEQDFYDLTWAYLQRCKAQNVIHTEPFFDPQTHTDRGIPFEVVLGGITQALKDGREQLGIGSGLILSFLRHLSEDEAQKTLDQALPFRDAFVAVGLDSSEKGHPPSKFQRVFDRARSEGFLTVAHAGEEGPPEYIWEAIDLLKIQRIDHGVRAIEDERLMQRIIDEQIPLTVCPLSNTKLCVFEHMSQHNILDMLERGVKVTVNSDDPAYFGGYVTENFHALYEHLGMTQDQARRLAQNSLDARLVR.

Zn(2+)-binding residues include histidine 14, histidine 16, and histidine 194. Catalysis depends on glutamate 197, which acts as the Proton donor. Residue aspartate 275 participates in Zn(2+) binding. Aspartate 276 contacts substrate.

This sequence belongs to the metallo-dependent hydrolases superfamily. Adenosine and AMP deaminases family. Adenine deaminase type 2 subfamily. Requires Zn(2+) as cofactor.

The enzyme catalyses adenine + H2O + H(+) = hypoxanthine + NH4(+). Its function is as follows. Catalyzes the hydrolytic deamination of adenine to hypoxanthine. Plays an important role in the purine salvage pathway and in nitrogen catabolism. In Pseudomonas entomophila (strain L48), this protein is Adenine deaminase.